We begin with the raw amino-acid sequence, 192 residues long: Leucine-rich repeat-containing protein 51 (192 aa).

LRR repeat units follow at residues 49 to 71, 80 to 101, and 103 to 124; these read SLTQ…NQVV, NLAW…LTTF, and NLSV…NKLA. Positions 137–175 constitute an LRRCT domain; the sequence is NPIEEEKGYRQYVLCNLPRITTFDFSGVTKADRSTAEVW.

Its subcellular location is the cytoplasm. In Rattus norvegicus (Rat), this protein is Leucine-rich repeat-containing protein 51.